Consider the following 279-residue polypeptide: Diaminopimelate epimerase (279 aa).

Positions 12, 45, and 65 each coordinate substrate. Cysteine 74 functions as the Proton donor in the catalytic mechanism. Residues 75-76 (GN), asparagine 162, asparagine 195, and 213-214 (ER) contribute to the substrate site. Residue cysteine 222 is the Proton acceptor of the active site. Position 223–224 (223–224 (GT)) interacts with substrate.

Belongs to the diaminopimelate epimerase family. In terms of assembly, homodimer.

It is found in the cytoplasm. The catalysed reaction is (2S,6S)-2,6-diaminopimelate = meso-2,6-diaminopimelate. The protein operates within amino-acid biosynthesis; L-lysine biosynthesis via DAP pathway; DL-2,6-diaminopimelate from LL-2,6-diaminopimelate: step 1/1. Functionally, catalyzes the stereoinversion of LL-2,6-diaminopimelate (L,L-DAP) to meso-diaminopimelate (meso-DAP), a precursor of L-lysine and an essential component of the bacterial peptidoglycan. This is Diaminopimelate epimerase from Shewanella woodyi (strain ATCC 51908 / MS32).